A 65-amino-acid chain; its full sequence is U2-theraphotoxin-Pc1a (65 aa).

An N-terminal signal peptide occupies residues 1-20 (MGFKLVLFIAVLTLVGSSNA). Positions 21-36 (EISAKMDSRDSPMIQE) are excised as a propeptide. 3 cysteine pairs are disulfide-bonded: cysteine 39-cysteine 56, cysteine 46-cysteine 59, and cysteine 55-cysteine 64.

The protein belongs to the neurotoxin 36 family. 02 subfamily. As to expression, expressed by the venom gland.

It is found in the secreted. In terms of biological role, possesses strong antiplasmodial activity against the intra-erythrocyte stage of P.falciparum in vitro. IC(50) for inhibiting P.falciparum growth is 1.15 uM. Specifically interacts with infected erythrocytes. Does not lyse erythrocytes, is not cytotoxic to nucleated mammalian cells, and does not inhibit neuromuscular function. Has neither antibacterial nor antifungal activity. The protein is U2-theraphotoxin-Pc1a of Psalmopoeus cambridgei (Trinidad chevron tarantula).